The primary structure comprises 341 residues: Thromboxane A2 receptor (341 aa).

The Extracellular segment spans residues 1 to 29 (MWLNSTSLGACFRPVNITLQERRAIASPW). N-linked (GlcNAc...) asparagine glycans are attached at residues N4 and N16. Residues 30–52 (FAASFCALGLGSNLLALSVLAGA) traverse the membrane as a helical segment. The Cytoplasmic segment spans residues 53-65 (RPGAGPRSSFLAL). The helical transmembrane segment at 66 to 86 (LCGLVLTDFLGLLVTGAVVAS) threads the bilayer. Over 87 to 105 (QHAALLDWRATDPGCRLCH) the chain is Extracellular. C104 and C181 form a disulfide bridge. A helical membrane pass occupies residues 106–127 (FMGAAMVFFGLCPLLLGAAMAA). Residues 128–147 (ERFVGITRPFSRPAATSRRA) are Cytoplasmic-facing. The chain crosses the membrane as a helical span at residues 148-170 (WATVGLVWVGAGTLGLLPLLGLG). Over 171-191 (RYSVQYPGSWCFLTLGAERGD) the chain is Extracellular. Residues 192–217 (VAFGLMFALLGSVSVGLSLLLNTVSV) traverse the membrane as a helical segment. The Cytoplasmic portion of the chain corresponds to 218-244 (ATLCRVYHAREATQRPRDCEVEMMVQL). A helical transmembrane segment spans residues 245–268 (VGIMVVATVCWMPLLVFILQTLLQ). Topologically, residues 269–287 (TLPVMSPSGQLLRTTERQL) are extracellular. The chain crosses the membrane as a helical span at residues 288–309 (LIYLRVATWNQILDPWVYILFR). Residues 310-341 (RSVLRRLHPRFTSQLQAVSLHSPPTQAMLSGP) are Cytoplasmic-facing. At S328 the chain carries Phosphoserine.

It belongs to the G-protein coupled receptor 1 family. Interacts with RPGRIP1L. Interacts with RACK1; the interaction regulates TBXA2R cell surface expression. As to expression, in the brain, expressed in all types of glial cells. In the kidney, expressed in the mesangial cells of the glomerulus, smooth muscle cells of the renal arterioles, and in transitional cell epithelium of renal pelvis.

Its subcellular location is the cell membrane. Functionally, receptor for thromboxane A2 (TXA2), a potent stimulator of platelet aggregation. The activity of this receptor is mediated by a G-protein that activates a phosphatidylinositol-calcium second messenger system. In the kidney, the binding of TXA2 to glomerular TP receptors causes intense vasoconstriction. Activates phospholipase C and adenylyl cyclase. The protein is Thromboxane A2 receptor (Tbxa2r) of Rattus norvegicus (Rat).